The sequence spans 84 residues: RNA-binding protein Hfq (84 aa).

Residues 11 to 71 (DTFLNFVRKN…ISTIMPGAPI (61 aa)) enclose the Sm domain.

The protein belongs to the Hfq family. As to quaternary structure, homohexamer.

Its function is as follows. RNA chaperone that binds small regulatory RNA (sRNAs) and mRNAs to facilitate mRNA translational regulation in response to envelope stress, environmental stress and changes in metabolite concentrations. Also binds with high specificity to tRNAs. The polypeptide is RNA-binding protein Hfq (Beijerinckia indica subsp. indica (strain ATCC 9039 / DSM 1715 / NCIMB 8712)).